The sequence spans 177 residues: Inner membrane-spanning protein YciB (177 aa).

The next 5 helical transmembrane spans lie at 22–42 (IFIA…IHWI), 50–70 (ISLF…FFHN), 76–96 (WKIT…QFFT), 121–141 (FIWS…AYYF), and 149–169 (FKVF…SIYI).

The protein belongs to the YciB family.

The protein localises to the cell inner membrane. In terms of biological role, plays a role in cell envelope biogenesis, maintenance of cell envelope integrity and membrane homeostasis. The chain is Inner membrane-spanning protein YciB from Buchnera aphidicola subsp. Acyrthosiphon pisum (strain APS) (Acyrthosiphon pisum symbiotic bacterium).